A 460-amino-acid chain; its full sequence is C4-dicarboxylate transport protein (460 aa).

Helical transmembrane passes span 21–38 (LYFQ…IGHF), 53–75 (FIKL…GIAG), 88–110 (YALL…VVNV), 153–175 (IVGA…FGFA), 196–218 (VMFN…AMAF), 231–253 (LGQL…LGSI), 301–323 (VVGL…YLTM), and 363–385 (FIVL…ALIL). A disordered region spans residues 438-460 (PEDDLGVAEGPTPANAVNTTKTV).

The protein belongs to the dicarboxylate/amino acid:cation symporter (DAACS) (TC 2.A.23) family.

The protein localises to the cell inner membrane. Its function is as follows. Responsible for the transport of dicarboxylates such as succinate, fumarate, and malate from the periplasm across the membrane. This Pseudomonas syringae pv. tomato (strain ATCC BAA-871 / DC3000) protein is C4-dicarboxylate transport protein.